We begin with the raw amino-acid sequence, 384 residues long: UDP-N-acetylglucosamine--N-acetylmuramyl-(pentapeptide) pyrophosphoryl-undecaprenol N-acetylglucosamine transferase (384 aa).

UDP-N-acetyl-alpha-D-glucosamine-binding positions include 22 to 24 (TGG), Arg179, Ser209, and Gln312.

It belongs to the glycosyltransferase 28 family. MurG subfamily.

The protein resides in the cell inner membrane. The catalysed reaction is di-trans,octa-cis-undecaprenyl diphospho-N-acetyl-alpha-D-muramoyl-L-alanyl-D-glutamyl-meso-2,6-diaminopimeloyl-D-alanyl-D-alanine + UDP-N-acetyl-alpha-D-glucosamine = di-trans,octa-cis-undecaprenyl diphospho-[N-acetyl-alpha-D-glucosaminyl-(1-&gt;4)]-N-acetyl-alpha-D-muramoyl-L-alanyl-D-glutamyl-meso-2,6-diaminopimeloyl-D-alanyl-D-alanine + UDP + H(+). The protein operates within cell wall biogenesis; peptidoglycan biosynthesis. In terms of biological role, cell wall formation. Catalyzes the transfer of a GlcNAc subunit on undecaprenyl-pyrophosphoryl-MurNAc-pentapeptide (lipid intermediate I) to form undecaprenyl-pyrophosphoryl-MurNAc-(pentapeptide)GlcNAc (lipid intermediate II). This Treponema pallidum (strain Nichols) protein is UDP-N-acetylglucosamine--N-acetylmuramyl-(pentapeptide) pyrophosphoryl-undecaprenol N-acetylglucosamine transferase.